A 247-amino-acid chain; its full sequence is Aliphatic sulfonates import ATP-binding protein SsuB 3 (247 aa).

Positions 28 to 242 constitute an ABC transporter domain; it reads VSVRGLQRRY…ALRSILLEEL (215 aa). Position 60–67 (60–67) interacts with ATP; it reads GESGCGKT.

Belongs to the ABC transporter superfamily. Aliphatic sulfonates importer (TC 3.A.1.17.2) family. The complex is composed of two ATP-binding proteins (SsuB), two transmembrane proteins (SsuC) and a solute-binding protein (SsuA).

Its subcellular location is the cell inner membrane. It catalyses the reaction ATP + H2O + aliphatic sulfonate-[sulfonate-binding protein]Side 1 = ADP + phosphate + aliphatic sulfonateSide 2 + [sulfonate-binding protein]Side 1.. Its function is as follows. Part of the ABC transporter complex SsuABC involved in aliphatic sulfonates import. Responsible for energy coupling to the transport system. The protein is Aliphatic sulfonates import ATP-binding protein SsuB 3 of Paraburkholderia xenovorans (strain LB400).